The sequence spans 179 residues: Macro domain-containing protein XAC3343 (179 aa).

Residues 1–175 enclose the Macro domain; sequence MRIEVWQGDI…AYQQALATQE (175 aa).

This sequence belongs to the MacroD-type family.

This is Macro domain-containing protein XAC3343 from Xanthomonas axonopodis pv. citri (strain 306).